Here is a 259-residue protein sequence, read N- to C-terminus: Probable ABC transporter permease protein RF_0080 (259 aa).

5 helical membrane-spanning segments follow: residues 13–35 (TIKFAQSVGSFSLFSFAAVSSII), 49–69 (LFIGFHSLPVVAMTTFFSGAV), 148–168 (VIAAIITMPCLVLIGDIIGVM), 195–215 (PIDVISGLVKAGVFGFIISII), and 237–257 (AVVNSSILILISNYLITELFF).

This sequence belongs to the MlaE permease family.

It is found in the cell inner membrane. In terms of biological role, could be part of an ABC transporter complex. In Rickettsia felis (strain ATCC VR-1525 / URRWXCal2) (Rickettsia azadi), this protein is Probable ABC transporter permease protein RF_0080.